We begin with the raw amino-acid sequence, 304 residues long: Xylanase inhibitor protein 1 (304 aa).

A signal peptide spans 1 to 29 (MVALGRRSWLVPLAMVLAVSSCLAGPAMA). Residues 34–304 (GQMTVFWGRN…GYGKTVKYWA (271 aa)) form the GH18 domain. 2 cysteine pairs are disulfide-bonded: Cys-53–Cys-93 and Cys-190–Cys-219.

It belongs to the glycosyl hydrolase 18 family. Xylanase inhibitor subfamily. As to quaternary structure, binds to fungal GH11 xylanases. Constitutively expressed in shoots.

It is found in the secreted. In terms of biological role, fungal xylanase inhibitor. Possesses competitive inhibiting activity against fungal endo-1,4-beta-D-xylanases belonging to glycoside hydrolase family 11 (GH11). May function in plant defense against secreted fungal pathogen xylanases. Is similar to class III chitinases, but does not exhibit chitinase activity. The protein is Xylanase inhibitor protein 1 of Oryza sativa subsp. japonica (Rice).